The following is a 644-amino-acid chain: Exoribonuclease 2 (644 aa).

In terms of domain architecture, RNB spans 189 to 516 (REDLTALDFV…NHRLLKAVIK (328 aa)). Residues 561 to 643 (DTRFAAEIVD…ETRSIIARPV (83 aa)) form the S1 motif domain.

The protein belongs to the RNR ribonuclease family. RNase II subfamily.

The protein resides in the cytoplasm. The catalysed reaction is Exonucleolytic cleavage in the 3'- to 5'-direction to yield nucleoside 5'-phosphates.. Involved in mRNA degradation. Hydrolyzes single-stranded polyribonucleotides processively in the 3' to 5' direction. This Escherichia coli O127:H6 (strain E2348/69 / EPEC) protein is Exoribonuclease 2.